Reading from the N-terminus, the 499-residue chain is Lysosomal Pro-X carboxypeptidase (499 aa).

An N-terminal signal peptide occupies residues 1–21 (MGRCSLLLLLLLIAFLTPGAA). Positions 22-47 (NPVSPSLRAPSSLPWSTSFRSRPTIT) are excised as a propeptide. The N-linked (GlcNAc...) asparagine glycan is linked to N103. S181 (charge relay system) is an active-site residue. The segment at 196 to 337 (HLVVGALASS…QNIFQALNVY (142 aa)) is SKS domain. Cystine bridges form between C217–C375, C235–C313, C266–C346, and C367–C397. N234 is a glycosylation site (N-linked (GlcNAc...) asparagine). N339 and N348 each carry an N-linked (GlcNAc...) asparagine glycan. N-linked (GlcNAc...) asparagine glycosylation occurs at N418. Active-site charge relay system residues include D433 and H458.

It belongs to the peptidase S28 family. In terms of assembly, homodimer.

It localises to the lysosome. It carries out the reaction Cleavage of a -Pro-|-Xaa bond to release a C-terminal amino acid.. Its function is as follows. Cleaves C-terminal amino acids linked to proline in peptides such as angiotensin II, III and des-Arg9-bradykinin. This cleavage occurs at acidic pH, but enzymatic activity is retained with some substrates at neutral pH. The chain is Lysosomal Pro-X carboxypeptidase (PRCP) from Bos taurus (Bovine).